The sequence spans 388 residues: Formate-dependent phosphoribosylglycinamide formyltransferase (388 aa).

N(1)-(5-phospho-beta-D-ribosyl)glycinamide contacts are provided by residues 21-22 (EL) and Glu-81. ATP contacts are provided by residues Arg-113, Lys-154, 159-164 (SSGHGQ), 193-196 (EEFI), and Glu-201. The ATP-grasp domain maps to 118–306 (KFAAEELGLK…EFALHVRAVL (189 aa)). The Mg(2+) site is built by Glu-265 and Glu-277. N(1)-(5-phospho-beta-D-ribosyl)glycinamide contacts are provided by residues Asp-284, Lys-352, and 359-360 (RR).

It belongs to the PurK/PurT family. In terms of assembly, homodimer.

The enzyme catalyses N(1)-(5-phospho-beta-D-ribosyl)glycinamide + formate + ATP = N(2)-formyl-N(1)-(5-phospho-beta-D-ribosyl)glycinamide + ADP + phosphate + H(+). The protein operates within purine metabolism; IMP biosynthesis via de novo pathway; N(2)-formyl-N(1)-(5-phospho-D-ribosyl)glycinamide from N(1)-(5-phospho-D-ribosyl)glycinamide (formate route): step 1/1. Involved in the de novo purine biosynthesis. Catalyzes the transfer of formate to 5-phospho-ribosyl-glycinamide (GAR), producing 5-phospho-ribosyl-N-formylglycinamide (FGAR). Formate is provided by PurU via hydrolysis of 10-formyl-tetrahydrofolate. In Nitratiruptor sp. (strain SB155-2), this protein is Formate-dependent phosphoribosylglycinamide formyltransferase.